We begin with the raw amino-acid sequence, 203 residues long: Glycerol-3-phosphate acyltransferase (203 aa).

5 helical membrane-spanning segments follow: residues 2 to 22 (LATL…AILV), 54 to 74 (CLVL…AYFL), 80 to 100 (ALGL…FFGF), 114 to 134 (LPIG…MVAI), and 153 to 173 (TWLI…LIIF).

This sequence belongs to the PlsY family. Probably interacts with PlsX.

The protein resides in the cell inner membrane. It catalyses the reaction an acyl phosphate + sn-glycerol 3-phosphate = a 1-acyl-sn-glycero-3-phosphate + phosphate. It functions in the pathway lipid metabolism; phospholipid metabolism. Functionally, catalyzes the transfer of an acyl group from acyl-phosphate (acyl-PO(4)) to glycerol-3-phosphate (G3P) to form lysophosphatidic acid (LPA). This enzyme utilizes acyl-phosphate as fatty acyl donor, but not acyl-CoA or acyl-ACP. This is Glycerol-3-phosphate acyltransferase from Pseudoalteromonas translucida (strain TAC 125).